Reading from the N-terminus, the 274-residue chain is MKVNIDNKIKLHGFNNLTKTLSFNMYDICYAKSAEDREAYISYIDEQYNADRLTEILTNVTEIIGANILNIAKQDYDPQGASVTILVCENPIEEERKEALVKETPGPLPEIVLAHLDKSHITVHTYPEYHPDEGICTFRADIDVSTCGMISPLRALNYLVHSFEADIMTMDYRVRGFTRDITGRKLFIDHKINSIQNYIPSNIKTKYNMIDVNVYQENIFHTKCRLKQFDLDNYLFGYTKKDLYPKERKKITHKLKKEMDEIFYGKNFDEVYYK.

The active-site Schiff-base intermediate with substrate; via pyruvic acid is the Ser-119. Ser-119 bears the Pyruvic acid (Ser); by autocatalysis mark. His-124 serves as the catalytic Proton acceptor; for processing activity. Cys-147 (proton donor; for catalytic activity) is an active-site residue.

This sequence belongs to the prokaryotic AdoMetDC family. Type 2 subfamily. In terms of assembly, heterooctamer of four alpha and four beta chains arranged as a tetramer of alpha/beta heterodimers. Requires pyruvate as cofactor. Post-translationally, is synthesized initially as an inactive proenzyme. Formation of the active enzyme involves a self-maturation process in which the active site pyruvoyl group is generated from an internal serine residue via an autocatalytic post-translational modification. Two non-identical subunits are generated from the proenzyme in this reaction, and the pyruvate is formed at the N-terminus of the alpha chain, which is derived from the carboxyl end of the proenzyme. The post-translation cleavage follows an unusual pathway, termed non-hydrolytic serinolysis, in which the side chain hydroxyl group of the serine supplies its oxygen atom to form the C-terminus of the beta chain, while the remainder of the serine residue undergoes an oxidative deamination to produce ammonia and the pyruvoyl group blocking the N-terminus of the alpha chain.

It carries out the reaction S-adenosyl-L-methionine + H(+) = S-adenosyl 3-(methylsulfanyl)propylamine + CO2. Its pathway is amine and polyamine biosynthesis; S-adenosylmethioninamine biosynthesis; S-adenosylmethioninamine from S-adenosyl-L-methionine: step 1/1. In terms of biological role, catalyzes the decarboxylation of S-adenosylmethionine to S-adenosylmethioninamine (dcAdoMet), the propylamine donor required for the synthesis of the polyamines spermine and spermidine from the diamine putrescine. This Clostridium acetobutylicum (strain ATCC 824 / DSM 792 / JCM 1419 / IAM 19013 / LMG 5710 / NBRC 13948 / NRRL B-527 / VKM B-1787 / 2291 / W) protein is S-adenosylmethionine decarboxylase proenzyme.